The primary structure comprises 67 residues: Conotoxin Cl6.10 (67 aa).

A signal peptide spans 1 to 24 (MKLTCVLIAAVLLLAVCQLDSADA). Positions 25–37 (TAYMRKDPSLRSP) are excised as a propeptide. 3 cysteine pairs are disulfide-bonded: Cys43-Cys57, Cys50-Cys61, and Cys56-Cys65.

Belongs to the conotoxin O1 superfamily. Expressed by the venom duct.

Its subcellular location is the secreted. This chain is Conotoxin Cl6.10, found in Californiconus californicus (California cone).